Reading from the N-terminus, the 250-residue chain is MNPVVKVDNLSVFYEQHQAIKNIRFQAGPGQMIGILGPNGAGKSTLMKAILGLERYTGTVKVLDKHVRHVRKQIAYVPQRNAIDWDFPVLVEDVVMMGRFAHIPWFKRAGKNDKRLVEESLKKVGMEEYRSRQIGELSGGQQQRVFIARALAQESELFFLDEPFVGIDVTSESIILSLLQELRDRGKTIFVVHHDLSKVEKYFDQVLMLNKELIAYGPVADVYTPEMVAKTYQGNLATFSKKDEVMVVNV.

The region spanning 5–236 (VKVDNLSVFY…MVAKTYQGNL (232 aa)) is the ABC transporter domain. Residue 37–44 (GPNGAGKS) participates in ATP binding.

Belongs to the ABC transporter superfamily.

The protein resides in the cell membrane. This protein is probably a component of a manganese permease, a binding protein-dependent, ATP-driven transport system. Probably responsible for energy coupling to the transport system. This chain is Manganese transport system ATP-binding protein MntB (mntB), found in Halalkalibacterium halodurans (strain ATCC BAA-125 / DSM 18197 / FERM 7344 / JCM 9153 / C-125) (Bacillus halodurans).